We begin with the raw amino-acid sequence, 39 residues long: Cytochrome b559 subunit beta (39 aa).

A helical transmembrane segment spans residues 14-30 (WLTVHGLAVPTVSFLGS). His-18 contacts heme.

Belongs to the PsbE/PsbF family. As to quaternary structure, heterodimer of an alpha subunit and a beta subunit. PSII is composed of 1 copy each of membrane proteins PsbA, PsbB, PsbC, PsbD, PsbE, PsbF, PsbH, PsbI, PsbJ, PsbK, PsbL, PsbM, PsbT, PsbX, PsbY, PsbZ, Psb30/Ycf12, at least 3 peripheral proteins of the oxygen-evolving complex and a large number of cofactors. It forms dimeric complexes. The cofactor is heme b.

It localises to the plastid. Its subcellular location is the chloroplast thylakoid membrane. Functionally, this b-type cytochrome is tightly associated with the reaction center of photosystem II (PSII). PSII is a light-driven water:plastoquinone oxidoreductase that uses light energy to abstract electrons from H(2)O, generating O(2) and a proton gradient subsequently used for ATP formation. It consists of a core antenna complex that captures photons, and an electron transfer chain that converts photonic excitation into a charge separation. This Cucumis sativus (Cucumber) protein is Cytochrome b559 subunit beta.